Reading from the N-terminus, the 557-residue chain is DNA ligase (557 aa).

E251 is a binding site for ATP. K253 serves as the catalytic N6-AMP-lysine intermediate. Positions 258, 273, 303, 342, 418, and 424 each coordinate ATP.

The protein belongs to the ATP-dependent DNA ligase family. Mg(2+) is required as a cofactor.

The enzyme catalyses ATP + (deoxyribonucleotide)n-3'-hydroxyl + 5'-phospho-(deoxyribonucleotide)m = (deoxyribonucleotide)n+m + AMP + diphosphate.. Its function is as follows. DNA ligase that seals nicks in double-stranded DNA during DNA replication, DNA recombination and DNA repair. The chain is DNA ligase from Methanosphaera stadtmanae (strain ATCC 43021 / DSM 3091 / JCM 11832 / MCB-3).